The following is a 429-amino-acid chain: Glutamate-1-semialdehyde 2,1-aminomutase 1 (429 aa).

K268 is modified (N6-(pyridoxal phosphate)lysine).

It belongs to the class-III pyridoxal-phosphate-dependent aminotransferase family. HemL subfamily. Homodimer. Pyridoxal 5'-phosphate serves as cofactor.

Its subcellular location is the cytoplasm. It carries out the reaction (S)-4-amino-5-oxopentanoate = 5-aminolevulinate. Its pathway is porphyrin-containing compound metabolism; protoporphyrin-IX biosynthesis; 5-aminolevulinate from L-glutamyl-tRNA(Glu): step 2/2. The sequence is that of Glutamate-1-semialdehyde 2,1-aminomutase 1 from Listeria innocua serovar 6a (strain ATCC BAA-680 / CLIP 11262).